The chain runs to 389 residues: MVTVEDVRKAQRAEGPATVMAIGTATPPNCVDQSTYPDFYFRITNSEHKAELKEKFQRMCDKSMIKKRYMYLTEEILKENPSVCEYMAPSLDARQDMVVVEVPKLGKEAATKAIKEWGQPKSKITHLVFCTTSGVDMPGADYQLTKLLGLRPSVKRLMMYQQGCFAGGTVLRLAKDLAENNKGARVLVVCSEITAVTFRGPSDTHLDSLVGQALFGDGAAAIIVGADPVPEVEKPLFELVSAAQTILPDSDGAIDGHLREVGLTFHLLKDVPGLISKNIEKALTEAFQPLGISDWNSIFWIAHPGGPAILDQVELKLSLKPEKLRATRHVLSEYGNMSSACVLFILDEMRRKSAEEGLKTTGEGLEWGVLFGFGPGLTVETVVLHSLCT.

Residues Cys164, His303, and Asn336 contribute to the active site.

Belongs to the thiolase-like superfamily. Chalcone/stilbene synthases family. In terms of assembly, homodimer. As to expression, mainly expressed in flowers, to a lower extent in young leaves, and barely in mature leaves and twigs.

It catalyses the reaction (E)-4-coumaroyl-CoA + 3 malonyl-CoA + 3 H(+) = 2',4,4',6'-tetrahydroxychalcone + 3 CO2 + 4 CoA. The protein operates within secondary metabolite biosynthesis; flavonoid biosynthesis. Its function is as follows. The primary product of this enzyme is 4,2',4',6'-tetrahydroxychalcone (also termed naringenin-chalcone or chalcone) which can under specific conditions spontaneously isomerize into naringenin. This Rhododendron dauricum (Azalea daurica) protein is Chalcone synthase.